Reading from the N-terminus, the 89-residue chain is Small ribosomal subunit protein uS15 (89 aa).

Belongs to the universal ribosomal protein uS15 family. As to quaternary structure, part of the 30S ribosomal subunit. Forms a bridge to the 50S subunit in the 70S ribosome, contacting the 23S rRNA.

In terms of biological role, one of the primary rRNA binding proteins, it binds directly to 16S rRNA where it helps nucleate assembly of the platform of the 30S subunit by binding and bridging several RNA helices of the 16S rRNA. Forms an intersubunit bridge (bridge B4) with the 23S rRNA of the 50S subunit in the ribosome. In Shewanella amazonensis (strain ATCC BAA-1098 / SB2B), this protein is Small ribosomal subunit protein uS15.